Consider the following 154-residue polypeptide: Large ribosomal subunit protein uL30 (154 aa).

The disordered stretch occupies residues 122 to 141 (RGGHDGIKTPASDGGQLGKH).

Belongs to the universal ribosomal protein uL30 family. As to quaternary structure, part of the 50S ribosomal subunit.

The sequence is that of Large ribosomal subunit protein uL30 from Halobacterium salinarum (strain ATCC 29341 / DSM 671 / R1).